We begin with the raw amino-acid sequence, 184 residues long: NADH-quinone oxidoreductase subunit B (184 aa).

Cysteine 63, cysteine 64, cysteine 128, and cysteine 158 together coordinate [4Fe-4S] cluster.

The protein belongs to the complex I 20 kDa subunit family. As to quaternary structure, NDH-1 is composed of 14 different subunits. Subunits NuoB, C, D, E, F, and G constitute the peripheral sector of the complex. [4Fe-4S] cluster serves as cofactor.

It is found in the cell inner membrane. It catalyses the reaction a quinone + NADH + 5 H(+)(in) = a quinol + NAD(+) + 4 H(+)(out). Its function is as follows. NDH-1 shuttles electrons from NADH, via FMN and iron-sulfur (Fe-S) centers, to quinones in the respiratory chain. Couples the redox reaction to proton translocation (for every two electrons transferred, four hydrogen ions are translocated across the cytoplasmic membrane), and thus conserves the redox energy in a proton gradient. This Xylella fastidiosa (strain 9a5c) protein is NADH-quinone oxidoreductase subunit B.